The chain runs to 646 residues: Rho guanine nucleotide exchange factor 7 (646 aa).

Residues 6–65 form the SH3 domain; it reads NSQLVVRAKFNFQQTNEDELSFSKGDVIHVTRVEEGGWWEGTHNGRTGWFPSNYVREIKP. Serine 7, serine 71, and serine 79 each carry phosphoserine. Residues 93-273 enclose the DH domain; that stretch reads YYNVVLQNIL…KNLSAQCQEV (181 aa). The 106-residue stretch at 295–400 folds into the PH domain; that stretch reads DIKTLGSVTY…WVEHLQRQTK (106 aa). Phosphoserine is present on serine 340. 2 disordered regions span residues 402–464 and 500–520; these read TSVS…GPLE and KTMK…DEEF. Over residues 415-428 the composition is skewed to polar residues; sequence PSHTLPSHPLTPSS. Residues 500 to 512 show a composition bias toward basic residues; sequence KTMKKLLPKRKPE. Phosphoserine occurs at positions 516 and 560.

Interacts with SCRIB; interaction is direct and may play a role in regulation of apoptosis. Interacts with PAK kinases through the SH3 domain. Interacts with GIT1 and probably TGFB1I1. Interacts with ITCH and PARVB. Interacts with FRMPD4 (via N-terminus). Interacts with CaMK1. Interacts with PTK2/FAK1 and RAC1. Interacts with BIN2. Interacts with YWHAZ. Interacts (via PH domain) with NOX1 (via FAD-binding FR-type domain). In terms of processing, phosphorylated on Ser-516 by CaMK1; enhancement of GEF activity and downstream activation of RAC1. Phosphorylated by PTK2/FAK1; this promotes interaction with RAC1.

The protein localises to the cell junction. It localises to the focal adhesion. It is found in the cell projection. Its subcellular location is the ruffle. The protein resides in the cytoplasm. The protein localises to the cell cortex. It localises to the lamellipodium. In terms of biological role, acts as a RAC1 guanine nucleotide exchange factor (GEF) and can induce membrane ruffling. Functions in cell migration, attachment and cell spreading. Promotes targeting of RAC1 to focal adhesions. May function as a positive regulator of apoptosis. Downstream of NMDA receptors and CaMKK-CaMK1 signaling cascade, promotes the formation of spines and synapses in hippocampal neurons. This chain is Rho guanine nucleotide exchange factor 7 (Arhgef7), found in Rattus norvegicus (Rat).